Reading from the N-terminus, the 149-residue chain is Hut operon positive regulatory protein (149 aa).

It belongs to the HutP family. In terms of assembly, homohexamer.

Functionally, antiterminator that binds to cis-acting regulatory sequences on the mRNA in the presence of histidine, thereby suppressing transcription termination and activating the hut operon for histidine utilization. This chain is Hut operon positive regulatory protein, found in Geobacillus thermodenitrificans (strain NG80-2).